A 183-amino-acid polypeptide reads, in one-letter code: uncharacterized protein (183 aa).

It belongs to the asfivirus S183L family.

This is an uncharacterized protein from Ornithodoros (relapsing fever ticks).